The sequence spans 686 residues: Cadmium, zinc and cobalt-transporting ATPase (686 aa).

Residues 1-62 form the HMA domain; the sequence is MQEYHIHNLD…FIKQNEPHLS (62 aa). The Cytoplasmic segment spans residues 1–72; it reads MQEYHIHNLD…LSFKEATEKP (72 aa). The Cd(2+) site is built by cysteine 11 and cysteine 14. Co(2+) contacts are provided by cysteine 11 and cysteine 14. Zn(2+) contacts are provided by cysteine 11 and cysteine 14. A helical transmembrane segment spans residues 73 to 92; it reads LSFTPLIITIMVFLGAILIL. The Extracellular segment spans residues 93–102; sequence HLNPSPLIEK. The helical transmembrane segment at 103-124 threads the bilayer; it reads AMFFVLALVYLVSGKDVILGAF. The Cytoplasmic portion of the chain corresponds to 125-131; sequence RGLRKGQ. A helical membrane pass occupies residues 132 to 151; that stretch reads FFDENALMLIATIAAFFVGA. The Extracellular segment spans residues 152 to 154; it reads YEE. A helical transmembrane segment spans residues 155-174; it reads SVSIMVFYSAGEFLQKLAVS. Residues 175-308 are Cytoplasmic-facing; that stretch reads RSKKSLKALV…ITKFSRYYTP (134 aa). The chain crosses the membrane as a helical span at residues 309–327; that stretch reads SVLFIALMIAVLPPLFSMG. The Extracellular portion of the chain corresponds to 328–332; it reads SFDEW. The helical transmembrane segment at 333-350 threads the bilayer; that stretch reads IYRGLVALMVSCPCALVI. Residues 351–635 lie on the Cytoplasmic side of the membrane; it reads SVPLGYFGGV…VLAIAKKTKS (285 aa). The active-site 4-aspartylphosphate intermediate is aspartate 388. Mg(2+)-binding residues include aspartate 583 and aspartate 587. The helical transmembrane segment at 636-657 threads the bilayer; that stretch reads IIWQNILFALGIKAVFIVLGLM. At 658-665 the chain is on the extracellular side; it reads GVASLWEA. A helical transmembrane segment spans residues 666-681; the sequence is VFGDVGVTLLALANSM. Residues 682–686 lie on the Cytoplasmic side of the membrane; it reads RAMRA.

Belongs to the cation transport ATPase (P-type) (TC 3.A.3) family. Type IB subfamily.

It is found in the cell membrane. The catalysed reaction is Zn(2+)(in) + ATP + H2O = Zn(2+)(out) + ADP + phosphate + H(+). It catalyses the reaction Cd(2+)(in) + ATP + H2O = Cd(2+)(out) + ADP + phosphate + H(+). Its function is as follows. Couples the hydrolysis of ATP with the transport of cadmium, zinc and cobalt out of the cell. This ion efflux may influence the activity of urease, which is essential for the survival of the bacterium in the gastric environment. In Helicobacter pylori (strain ATCC 700392 / 26695) (Campylobacter pylori), this protein is Cadmium, zinc and cobalt-transporting ATPase (cadA).